The sequence spans 391 residues: Elongation factor Tu (391 aa).

In terms of domain architecture, tr-type G spans 10–201 (KPHVNIGTIG…AVDAYIPTPE (192 aa)). Positions 19 to 26 (GHVDHGKT) are G1. Residue 19-26 (GHVDHGKT) coordinates GTP. Thr26 serves as a coordination point for Mg(2+). Residues 55–59 (GITIS) are G2. Positions 76–79 (DCPG) are G3. Residues 76–80 (DCPGH) and 131–134 (NKVD) each bind GTP. A G4 region spans residues 131–134 (NKVD). Residues 169–171 (SAL) are G5.

It belongs to the TRAFAC class translation factor GTPase superfamily. Classic translation factor GTPase family. EF-Tu/EF-1A subfamily. In terms of assembly, monomer.

It is found in the cytoplasm. The catalysed reaction is GTP + H2O = GDP + phosphate + H(+). In terms of biological role, GTP hydrolase that promotes the GTP-dependent binding of aminoacyl-tRNA to the A-site of ribosomes during protein biosynthesis. In Rhizobium johnstonii (strain DSM 114642 / LMG 32736 / 3841) (Rhizobium leguminosarum bv. viciae), this protein is Elongation factor Tu.